The sequence spans 322 residues: tRNA U34 carboxymethyltransferase (322 aa).

Residues Lys-90, Trp-104, Lys-109, Gly-129, 151–153, 180–181, Met-196, Tyr-200, and Arg-315 each bind carboxy-S-adenosyl-L-methionine; these read DPS and IE.

This sequence belongs to the class I-like SAM-binding methyltransferase superfamily. CmoB family. In terms of assembly, homotetramer.

It carries out the reaction carboxy-S-adenosyl-L-methionine + 5-hydroxyuridine(34) in tRNA = 5-carboxymethoxyuridine(34) in tRNA + S-adenosyl-L-homocysteine + H(+). Functionally, catalyzes carboxymethyl transfer from carboxy-S-adenosyl-L-methionine (Cx-SAM) to 5-hydroxyuridine (ho5U) to form 5-carboxymethoxyuridine (cmo5U) at position 34 in tRNAs. This Cellvibrio japonicus (strain Ueda107) (Pseudomonas fluorescens subsp. cellulosa) protein is tRNA U34 carboxymethyltransferase.